The sequence spans 181 residues: MKIALFGGSFDPPHNGHNSVVLEALEKLDIDKLIIMPTYINPFKKSFSADEKQRFLWVKKLWGHLPKVEICDFEIRQKRPVPSIESVKYLYKLYNPSKFYLLIGADHLEKLHLWHDFEKLNSLVEFVIANRNDIGIPKNFKDLKTNKKIASSFIRDTLNTNEVCEEIKDEVKKYYEKLQKN.

This sequence belongs to the NadD family.

It carries out the reaction nicotinate beta-D-ribonucleotide + ATP + H(+) = deamido-NAD(+) + diphosphate. The protein operates within cofactor biosynthesis; NAD(+) biosynthesis; deamido-NAD(+) from nicotinate D-ribonucleotide: step 1/1. In terms of biological role, catalyzes the reversible adenylation of nicotinate mononucleotide (NaMN) to nicotinic acid adenine dinucleotide (NaAD). The polypeptide is Probable nicotinate-nucleotide adenylyltransferase (Campylobacter jejuni subsp. jejuni serotype O:23/36 (strain 81-176)).